A 279-amino-acid polypeptide reads, in one-letter code: NADPH-dependent 7-cyano-7-deazaguanine reductase (279 aa).

Substrate is bound at residue 86 to 88 (IES). 88 to 89 (SK) contacts NADPH. Residue Cys187 is the Thioimide intermediate of the active site. Asp194 (proton donor) is an active-site residue. Residue 226-227 (HE) participates in substrate binding. An NADPH-binding site is contributed by 255–256 (RG).

The protein belongs to the GTP cyclohydrolase I family. QueF type 2 subfamily. In terms of assembly, homodimer.

The protein localises to the cytoplasm. The catalysed reaction is 7-aminomethyl-7-carbaguanine + 2 NADP(+) = 7-cyano-7-deazaguanine + 2 NADPH + 3 H(+). Its pathway is tRNA modification; tRNA-queuosine biosynthesis. Functionally, catalyzes the NADPH-dependent reduction of 7-cyano-7-deazaguanine (preQ0) to 7-aminomethyl-7-deazaguanine (preQ1). This chain is NADPH-dependent 7-cyano-7-deazaguanine reductase, found in Actinobacillus pleuropneumoniae serotype 3 (strain JL03).